The sequence spans 361 residues: Peptide chain release factor 1 (361 aa).

An N5-methylglutamine modification is found at Q237. The interval K287 to S306 is disordered.

Belongs to the prokaryotic/mitochondrial release factor family. In terms of processing, methylated by PrmC. Methylation increases the termination efficiency of RF1.

The protein resides in the cytoplasm. Its function is as follows. Peptide chain release factor 1 directs the termination of translation in response to the peptide chain termination codons UAG and UAA. The polypeptide is Peptide chain release factor 1 (Alteromonas mediterranea (strain DSM 17117 / CIP 110805 / LMG 28347 / Deep ecotype)).